The primary structure comprises 278 residues: Release factor glutamine methyltransferase (278 aa).

Residues 117 to 121 (GTGSG), aspartate 140, and asparagine 184 each bind S-adenosyl-L-methionine. 184-187 (NPPY) contributes to the substrate binding site.

The protein belongs to the protein N5-glutamine methyltransferase family. PrmC subfamily.

The catalysed reaction is L-glutaminyl-[peptide chain release factor] + S-adenosyl-L-methionine = N(5)-methyl-L-glutaminyl-[peptide chain release factor] + S-adenosyl-L-homocysteine + H(+). In terms of biological role, methylates the class 1 translation termination release factors RF1/PrfA and RF2/PrfB on the glutamine residue of the universally conserved GGQ motif. This is Release factor glutamine methyltransferase from Bacteroides thetaiotaomicron (strain ATCC 29148 / DSM 2079 / JCM 5827 / CCUG 10774 / NCTC 10582 / VPI-5482 / E50).